Here is a 286-residue protein sequence, read N- to C-terminus: Bifunctional protein FolD (286 aa).

NADP(+)-binding positions include 165 to 167 (GRS), Ser-190, and Val-231.

It belongs to the tetrahydrofolate dehydrogenase/cyclohydrolase family. Homodimer.

The enzyme catalyses (6R)-5,10-methylene-5,6,7,8-tetrahydrofolate + NADP(+) = (6R)-5,10-methenyltetrahydrofolate + NADPH. It catalyses the reaction (6R)-5,10-methenyltetrahydrofolate + H2O = (6R)-10-formyltetrahydrofolate + H(+). It functions in the pathway one-carbon metabolism; tetrahydrofolate interconversion. Functionally, catalyzes the oxidation of 5,10-methylenetetrahydrofolate to 5,10-methenyltetrahydrofolate and then the hydrolysis of 5,10-methenyltetrahydrofolate to 10-formyltetrahydrofolate. This is Bifunctional protein FolD from Bacillus cereus (strain ATCC 14579 / DSM 31 / CCUG 7414 / JCM 2152 / NBRC 15305 / NCIMB 9373 / NCTC 2599 / NRRL B-3711).